The primary structure comprises 413 residues: ATP-dependent RNA helicase RhlB (413 aa).

The Q motif signature appears at 9-37; sequence QRFADLPLHPQILAALNDQNFEYCTPIQA. Residues 40-217 enclose the Helicase ATP-binding domain; that stretch reads LPLTLQGKDV…FEDMNDPEYI (178 aa). Residue 53–60 coordinates ATP; it reads AQTGTGKT. The DEAD box signature appears at 163–166; sequence DEAD. In terms of domain architecture, Helicase C-terminal spans 241 to 388; it reads KMALLMTLLE…VSQYDPDSLI (148 aa).

The protein belongs to the DEAD box helicase family. RhlB subfamily. Component of the RNA degradosome, which is a multiprotein complex involved in RNA processing and mRNA degradation.

The protein localises to the cytoplasm. The catalysed reaction is ATP + H2O = ADP + phosphate + H(+). In terms of biological role, DEAD-box RNA helicase involved in RNA degradation. Has RNA-dependent ATPase activity and unwinds double-stranded RNA. The polypeptide is ATP-dependent RNA helicase RhlB (Actinobacillus succinogenes (strain ATCC 55618 / DSM 22257 / CCUG 43843 / 130Z)).